Consider the following 563-residue polypeptide: Arginine--tRNA ligase (563 aa).

A 'HIGH' region motif is present at residues 120 to 130 (PNIAKPFHIGH).

It belongs to the class-I aminoacyl-tRNA synthetase family. As to quaternary structure, monomer.

Its subcellular location is the cytoplasm. It carries out the reaction tRNA(Arg) + L-arginine + ATP = L-arginyl-tRNA(Arg) + AMP + diphosphate. The polypeptide is Arginine--tRNA ligase (Clostridium botulinum (strain Loch Maree / Type A3)).